Here is a 60-residue protein sequence, read N- to C-terminus: UPF0434 protein NMC0623 (60 aa).

This sequence belongs to the UPF0434 family.

The polypeptide is UPF0434 protein NMC0623 (Neisseria meningitidis serogroup C / serotype 2a (strain ATCC 700532 / DSM 15464 / FAM18)).